Consider the following 1827-residue polypeptide: Laminin subunit beta-4 (1827 aa).

The first 21 residues, methionine 1–leucine 21, serve as a signal peptide directing secretion. The Laminin N-terminal domain maps to valine 26–serine 266. Asparagine 231 carries an N-linked (GlcNAc...) asparagine glycan. 19 disulfide bridges follow: cysteine 267/cysteine 276, cysteine 269/cysteine 297, cysteine 299/cysteine 308, cysteine 311/cysteine 331, cysteine 334/cysteine 343, cysteine 336/cysteine 361, cysteine 364/cysteine 373, cysteine 376/cysteine 394, cysteine 397/cysteine 410, cysteine 399/cysteine 417, cysteine 419/cysteine 428, cysteine 431/cysteine 446, cysteine 449/cysteine 463, cysteine 451/cysteine 470, cysteine 472/cysteine 481, cysteine 484/cysteine 498, cysteine 501/cysteine 513, cysteine 503/cysteine 520, and cysteine 522/cysteine 531. Laminin EGF-like domains lie at cysteine 267–arginine 333, cysteine 334–proline 396, cysteine 397–leucine 448, and cysteine 449–proline 500. Residues cysteine 501 to aspartate 544 enclose the Laminin EGF-like 5; truncated domain. A Laminin IV type B domain is found at leucine 540–histidine 847. 32 disulfide bridges follow: cysteine 853-cysteine 865, cysteine 855-cysteine 872, cysteine 874-cysteine 883, cysteine 886-cysteine 898, cysteine 901-cysteine 913, cysteine 903-cysteine 920, cysteine 922-cysteine 931, cysteine 934-cysteine 944, cysteine 947-cysteine 956, cysteine 949-cysteine 963, cysteine 966-cysteine 975, cysteine 978-cysteine 992, cysteine 995-cysteine 1011, cysteine 997-cysteine 1022, cysteine 1024-cysteine 1033, cysteine 1036-cysteine 1051, cysteine 1054-cysteine 1068, cysteine 1056-cysteine 1075, cysteine 1078-cysteine 1087, cysteine 1090-cysteine 1103, cysteine 1106-cysteine 1126, cysteine 1108-cysteine 1133, cysteine 1135-cysteine 1144, cysteine 1147-cysteine 1160, cysteine 1163-cysteine 1175, cysteine 1165-cysteine 1182, cysteine 1184-cysteine 1193, cysteine 1196-cysteine 1208, cysteine 1211-cysteine 1223, cysteine 1213-cysteine 1230, cysteine 1232-cysteine 1241, and cysteine 1244-cysteine 1255. Laminin EGF-like domains are found at residues cysteine 853–proline 900, cysteine 901–arginine 946, cysteine 947–proline 994, cysteine 995–glutamate 1053, cysteine 1054–glutamate 1105, cysteine 1106–proline 1162, cysteine 1163–phenylalanine 1210, and cysteine 1211–proline 1257. Asparagine 1001 is a glycosylation site (N-linked (GlcNAc...) asparagine). Residues cysteine 1258–valine 1449 form a domain II region. 2 coiled-coil regions span residues glutamate 1294 to aspartate 1335 and asparagine 1385 to valine 1449. N-linked (GlcNAc...) asparagine glycosylation is present at asparagine 1329. A domain alpha region spans residues cysteine 1450 to cysteine 1476. The interval threonine 1477–proline 1827 is domain I. 14 N-linked (GlcNAc...) asparagine glycosylation sites follow: asparagine 1485, asparagine 1496, asparagine 1513, asparagine 1533, asparagine 1599, asparagine 1629, asparagine 1644, asparagine 1672, asparagine 1686, asparagine 1702, asparagine 1726, asparagine 1745, asparagine 1750, and asparagine 1761. Coiled-coil stretches lie at residues asparagine 1485 to lysine 1554 and aspartate 1584 to glutamine 1820.

In terms of assembly, laminin is a complex glycoprotein, consisting of three different polypeptide chains (alpha, beta, gamma), which are bound to each other by disulfide bonds into a cross-shaped molecule comprising one long and three short arms with globules at each end.

Its subcellular location is the secreted. It localises to the extracellular space. The protein resides in the extracellular matrix. It is found in the basement membrane. Binding to cells via a high affinity receptor, laminin is thought to mediate the attachment, migration and organization of cells into tissues during embryonic development by interacting with other extracellular matrix components. Positively regulates apical-basal distribution of Muller glia cells in the retina. This is Laminin subunit beta-4 (lamb4) from Danio rerio (Zebrafish).